The chain runs to 1159 residues: RNA-directed RNA polymerase (1159 aa).

The region spanning 545–727 is the RdRp catalytic domain; sequence LTYGVLAEDT…KALASYTGLE (183 aa).

It belongs to the reoviridae RNA-directed RNA polymerase family. Interacts with VP3 (Potential). Interacts with VP2 (Potential). Interacts with NSP5; this interaction is probably necessary for the formation of functional virus factories.

Its subcellular location is the virion. The catalysed reaction is RNA(n) + a ribonucleoside 5'-triphosphate = RNA(n+1) + diphosphate. In terms of biological role, RNA-directed RNA polymerase that is involved in both transcription and genome replication. Together with VP3 capping enzyme, forms an enzyme complex positioned near the channels situated at each of the five-fold vertices of the core. Following infection, the outermost layer of the virus is lost, leaving a double-layered particle (DLP) made up of the core and VP6 shell. VP1 then catalyzes the transcription of fully conservative plus-strand genomic RNAs that are extruded through the DLP's channels into the cytoplasm where they function as mRNAs for translation of viral proteins. One copy of each of the viral (+)RNAs is also recruited during core assembly, together with newly synthesized polymerase complexes and VP2. The polymerase of these novo-formed particles catalyzes the synthesis of complementary minus-strands leading to dsDNA formation. To do so, the polymerase specifically recognizes conserved 3' sequence(s) in plus-strand RNA templates. Once dsRNA synthesis is complete, the polymerase switches to the transcriptional mode, thus providing secondary transcription. This Homo sapiens (Human) protein is RNA-directed RNA polymerase.